Here is a 634-residue protein sequence, read N- to C-terminus: Calcium up-regulated protein D (634 aa).

Residues 1-23 are disordered; the sequence is MINIEDISKSSNQSEEKQLKSTS. 2 Ricin B-type lectin domains span residues 27-146 and 117-250; these read KPKY…WTTF and PGNG…WGIN.

Belongs to the cup family.

It localises to the cytoplasm. The protein localises to the membrane. Its function is as follows. May play an important role in stabilizing and/or regulating the cell membrane during Ca(2+) stress or certain stages of development. This chain is Calcium up-regulated protein D (cupD), found in Dictyostelium discoideum (Social amoeba).